The chain runs to 239 residues: Uridylate kinase (239 aa).

10–13 (KLSG) lines the ATP pocket. The involved in allosteric activation by GTP stretch occupies residues 18–23 (GEDGYG). UMP is bound at residue G52. Positions 53 and 57 each coordinate ATP. Residues D72 and 133–140 (TGNPYFTT) contribute to the UMP site. T160, Y166, and D169 together coordinate ATP.

Belongs to the UMP kinase family. Homohexamer.

It localises to the cytoplasm. The enzyme catalyses UMP + ATP = UDP + ADP. It participates in pyrimidine metabolism; CTP biosynthesis via de novo pathway; UDP from UMP (UMPK route): step 1/1. Allosterically activated by GTP. Inhibited by UTP. Functionally, catalyzes the reversible phosphorylation of UMP to UDP. This Chlorobium chlorochromatii (strain CaD3) protein is Uridylate kinase.